A 234-amino-acid chain; its full sequence is uncharacterized protein (234 aa).

4 helical membrane-spanning segments follow: residues 28–48 (IVIIALIYCILHDTMSLSIIS), 67–87 (FQIFIFLISILILQLTSFDPI), 123–143 (GGVDLFILLDACLLWANSGTI), and 154–174 (LYCIFHCSFILLGLGVGGLLY).

It belongs to the complex I subunit 2 family.

The protein localises to the mitochondrion membrane. This is an uncharacterized protein from Neurospora crassa (strain ATCC 24698 / 74-OR23-1A / CBS 708.71 / DSM 1257 / FGSC 987).